A 419-amino-acid polypeptide reads, in one-letter code: CinA-like protein (419 aa).

It belongs to the CinA family.

This chain is CinA-like protein, found in Acaryochloris marina (strain MBIC 11017).